Here is a 612-residue protein sequence, read N- to C-terminus: MNSNSQIRSSRLIEALHAYYSKYLVVTIRPIRYLVEPWQPCWPSEELWNSFNTSIDGKLQQLKPAAHVCYEPNFDKGACDDLLRLSRDSGWRASHPGVLQDWVWEAGESANETCPMGSLQTATAAKSCHQGRIPLYSATVESAQQVQQAVRFARRHNLRLVIRNTGHDLAGRSSAPDSFQIHTHRLQETQFHTDLRLNGSTASLGPAVTVGAGVMMGNLYARAAREGYMVLGGDCPTVGVAGGFLQGGGVSDFLSLNQGLGVDNVLEYEIVTADGELLVANTLQNQELFWALRGGGGGTFGVVTRATMRVFPDVPAVISEVLLQAPQTNSSSWTEGLSVILNALQSLNRDDVGGQLVIAVQPELAVQASIKFFFLNSTETTIIDERMKSLLTDLNRIDIQYTLSSKALPHFSSNYRQVPDIHSDNDYGVIGSTVAISKELFDSSQGPQKIARALANLPMSPGDLLFTSNLGGRVISNGEIAETSMHPAWRAASQLLNYIHAVGPSIESRVNALERLTNVQMPMLYAIDPNFRLSYRNVGDPNEKDFQQVYWGSNYKRLSQIKKRWDSDGLFFSKLGVGSELWDSEGMCRKNQSVVRQAVNYLMSFATSMVEG.

The FAD-binding PCMH-type domain maps to 129-313; that stretch reads HQGRIPLYSA…TRATMRVFPD (185 aa).

It belongs to the oxygen-dependent FAD-linked oxidoreductase family. The cofactor is FAD.

The protein operates within alkaloid biosynthesis; ergot alkaloid biosynthesis. FAD-linked oxidoreductase; part of the gene cluster that mediates the biosynthesis of fungal ergot alkaloid. DmaW catalyzes the first step of ergot alkaloid biosynthesis by condensing dimethylallyl diphosphate (DMAP) and tryptophan to form 4-dimethylallyl-L-tryptophan. The second step is catalyzed by the methyltransferase easF that methylates 4-dimethylallyl-L-tryptophan in the presence of S-adenosyl-L-methionine, resulting in the formation of 4-dimethylallyl-L-abrine. The catalase easC and the FAD-dependent oxidoreductase easE then transform 4-dimethylallyl-L-abrine to chanoclavine-I which is further oxidized by easD in the presence of NAD(+), resulting in the formation of chanoclavine-I aldehyde. Chanoclavine-I aldehyde is the precursor of ergoamides and ergopeptines in Clavicipitaceae, and clavine-type alcaloids such as fumiclavine in Trichocomaceae. However, the metabolites downstream of chanoclavine-I aldehyde in Arthrodermataceae have not been identified yet. This Arthroderma otae (strain ATCC MYA-4605 / CBS 113480) (Microsporum canis) protein is FAD-linked oxidoreductase easE.